Reading from the N-terminus, the 340-residue chain is Ubiquitin-like domain-containing CTD phosphatase (340 aa).

In terms of domain architecture, Ubiquitin-like spans 24 to 101 (LTLTVKWNGK…MTMIGTVEDD (78 aa)). Positions 151–312 (CRQGKKLLVL…VKLTQYLLTI (162 aa)) constitute an FCP1 homology domain. Residues 151–312 (CRQGKKLLVL…VKLTQYLLTI (162 aa)) form a phosphatase region. Positions 161, 163, and 271 each coordinate Mg(2+).

Mg(2+) is required as a cofactor.

The protein localises to the nucleus. It catalyses the reaction O-phospho-L-seryl-[protein] + H2O = L-seryl-[protein] + phosphate. The catalysed reaction is O-phospho-L-threonyl-[protein] + H2O = L-threonyl-[protein] + phosphate. Functionally, dephosphorylates 26S nuclear proteasomes, thereby decreasing their proteolytic activity. The dephosphorylation may prevent assembly of the core and regulatory particles (CP and RP) into mature 26S proteasome. The chain is Ubiquitin-like domain-containing CTD phosphatase from Arabidopsis thaliana (Mouse-ear cress).